The chain runs to 149 residues: D-aminoacyl-tRNA deacylase (149 aa).

A Gly-cisPro motif, important for rejection of L-amino acids motif is present at residues 137–138 (GP).

Belongs to the DTD family. In terms of assembly, homodimer.

The protein resides in the cytoplasm. The catalysed reaction is glycyl-tRNA(Ala) + H2O = tRNA(Ala) + glycine + H(+). The enzyme catalyses a D-aminoacyl-tRNA + H2O = a tRNA + a D-alpha-amino acid + H(+). Its function is as follows. An aminoacyl-tRNA editing enzyme that deacylates mischarged D-aminoacyl-tRNAs. Also deacylates mischarged glycyl-tRNA(Ala), protecting cells against glycine mischarging by AlaRS. Acts via tRNA-based rather than protein-based catalysis; rejects L-amino acids rather than detecting D-amino acids in the active site. By recycling D-aminoacyl-tRNA to D-amino acids and free tRNA molecules, this enzyme counteracts the toxicity associated with the formation of D-aminoacyl-tRNA entities in vivo and helps enforce protein L-homochirality. In Leuconostoc mesenteroides subsp. mesenteroides (strain ATCC 8293 / DSM 20343 / BCRC 11652 / CCM 1803 / JCM 6124 / NCDO 523 / NBRC 100496 / NCIMB 8023 / NCTC 12954 / NRRL B-1118 / 37Y), this protein is D-aminoacyl-tRNA deacylase.